Consider the following 313-residue polypeptide: E3 ubiquitin-protein ligase SGIP1 (313 aa).

Positions 16-65 (REYSKEIPIDLLIEIFSRLSTGDIARCRCVSKIWSSVPRLRDFTELFLKI) constitute an F-box domain.

As to quaternary structure, interacts with SGS3 in cytoplasmic granules.

Its subcellular location is the cytoplasmic granule. The catalysed reaction is S-ubiquitinyl-[E2 ubiquitin-conjugating enzyme]-L-cysteine + [acceptor protein]-L-lysine = [E2 ubiquitin-conjugating enzyme]-L-cysteine + N(6)-ubiquitinyl-[acceptor protein]-L-lysine.. It functions in the pathway protein degradation; proteasomal ubiquitin-dependent pathway. Its pathway is protein modification; protein ubiquitination. E3 ubiquitin-protein ligase which triggers the ubiquitination and subsequent degradation of SGS3 in response to heat. Involved in the mechanisms necessary for quick response to heat and subsequent heritable transgenerational memory of heat acclimation (global warming) such as early flowering and attenuated immunity; this process includes epigenetic regulation as well as post-transcriptional gene silencing (PTGS). In response to heat, HSFA2 is activated and promotes the expression of REF6 which in turn derepresses HSFA2, thus establishing an inheritable feedback loop able to trigger SGIP1 and subsequent SGIP1-mediated SGS3 degradation; this prevents the biosynthesis of trans-acting siRNA (tasiRNA) and leads to the release of HTT5, which drives early flowering but attenuates immunity. This Arabidopsis thaliana (Mouse-ear cress) protein is E3 ubiquitin-protein ligase SGIP1.